The following is a 608-amino-acid chain: tRNA (guanine(37)-N(1))-methyltransferase 1 (608 aa).

Residues 207 to 229 (SRPKKKKRRKEEERSEGKKRTGK) are disordered. A compositionally biased stretch (basic and acidic residues) spans 216–229 (KEEERSEGKKRTGK). S-adenosyl-L-methionine contacts are provided by residues Arg-425, 463–464 (DL), 491–492 (DG), and Asn-514.

Belongs to the class I-like SAM-binding methyltransferase superfamily. TRM5/TYW2 family. Monomer.

The protein resides in the mitochondrion matrix. Its subcellular location is the nucleus. The protein localises to the cytoplasm. The catalysed reaction is guanosine(37) in tRNA + S-adenosyl-L-methionine = N(1)-methylguanosine(37) in tRNA + S-adenosyl-L-homocysteine + H(+). In terms of biological role, specifically methylates the N1 position of guanosine-37 in various cytoplasmic and mitochondrial tRNAs. Methylation is not dependent on the nature of the nucleoside 5' of the target nucleoside. This is the first step in the biosynthesis of wybutosine (yW), a modified base adjacent to the anticodon of tRNAs and required for accurate decoding. The polypeptide is tRNA (guanine(37)-N(1))-methyltransferase 1 (Vitis vinifera (Grape)).